Consider the following 348-residue polypeptide: Zinc-type alcohol dehydrogenase-like protein C2E1P3.01 (348 aa).

The protein belongs to the zinc-containing alcohol dehydrogenase family. Quinone oxidoreductase subfamily.

The protein localises to the mitochondrion. This is Zinc-type alcohol dehydrogenase-like protein C2E1P3.01 from Schizosaccharomyces pombe (strain 972 / ATCC 24843) (Fission yeast).